Consider the following 357-residue polypeptide: tRNA-specific 2-thiouridylase MnmA (357 aa).

ATP is bound by residues 10–17 and Ile-36; that span reads GISGGVDS. Cys-98 serves as the catalytic Nucleophile. A disulfide bond links Cys-98 and Cys-194. Gly-122 provides a ligand contact to ATP. An interaction with tRNA region spans residues 144 to 146; that stretch reads KDQ. The active-site Cysteine persulfide intermediate is Cys-194. The interaction with tRNA stretch occupies residues 303-304; sequence RY.

This sequence belongs to the MnmA/TRMU family.

The protein resides in the cytoplasm. The enzyme catalyses S-sulfanyl-L-cysteinyl-[protein] + uridine(34) in tRNA + AH2 + ATP = 2-thiouridine(34) in tRNA + L-cysteinyl-[protein] + A + AMP + diphosphate + H(+). Catalyzes the 2-thiolation of uridine at the wobble position (U34) of tRNA, leading to the formation of s(2)U34. This chain is tRNA-specific 2-thiouridylase MnmA, found in Chlorobium phaeovibrioides (strain DSM 265 / 1930) (Prosthecochloris vibrioformis (strain DSM 265)).